Here is a 261-residue protein sequence, read N- to C-terminus: Cytochrome c oxidase subunit 3 (261 aa).

Topologically, residues 1 to 15 (MTHQTHAYHMVDPSP) are mitochondrial matrix. A helical membrane pass occupies residues 16-34 (WPLTGALSALLMTSGLTMW). Topologically, residues 35–40 (FHYHSV) are mitochondrial intermembrane. The helical transmembrane segment at 41–66 (TLLLLGLTTNILTMFQWWRDVVREGT) threads the bilayer. Residues 67 to 72 (FQGHHT) are Mitochondrial matrix-facing. Residues 73–105 (PVVQESLRYGMILFITSEVLFFTGFFWAFYHSS) form a helical membrane-spanning segment. Residues 106–128 (LAPTPELGSYWPPVGVYPLNPLE) lie on the Mitochondrial intermembrane side of the membrane. Residues 129–152 (VPLLNTSVLLASGVTITWAHHSLM) form a helical membrane-spanning segment. Residues 153–155 (EGN) lie on the Mitochondrial matrix side of the membrane. Residues 156-183 (RKNMLQALLITILLGVYFTLLQMFEYYE) traverse the membrane as a helical segment. The Mitochondrial intermembrane segment spans residues 184–190 (ASFTISD). The helical transmembrane segment at 191-223 (GIYGSTFFVTTGFHGLHVIIGSTFLLTCFIRQL) threads the bilayer. Residues 224–232 (KFHFTSNHH) are Mitochondrial matrix-facing. Residues 233 to 256 (FGFEAAAWYWHFVDVVWLFLYLSI) form a helical membrane-spanning segment. Topologically, residues 257-261 (YWWGS) are mitochondrial intermembrane.

It belongs to the cytochrome c oxidase subunit 3 family. In terms of assembly, component of the cytochrome c oxidase (complex IV, CIV), a multisubunit enzyme composed of 14 subunits. The complex is composed of a catalytic core of 3 subunits MT-CO1, MT-CO2 and MT-CO3, encoded in the mitochondrial DNA, and 11 supernumerary subunits COX4I, COX5A, COX5B, COX6A, COX6B, COX6C, COX7A, COX7B, COX7C, COX8 and NDUFA4, which are encoded in the nuclear genome. The complex exists as a monomer or a dimer and forms supercomplexes (SCs) in the inner mitochondrial membrane with NADH-ubiquinone oxidoreductase (complex I, CI) and ubiquinol-cytochrome c oxidoreductase (cytochrome b-c1 complex, complex III, CIII), resulting in different assemblies (supercomplex SCI(1)III(2)IV(1) and megacomplex MCI(2)III(2)IV(2)).

Its subcellular location is the mitochondrion inner membrane. It catalyses the reaction 4 Fe(II)-[cytochrome c] + O2 + 8 H(+)(in) = 4 Fe(III)-[cytochrome c] + 2 H2O + 4 H(+)(out). Its function is as follows. Component of the cytochrome c oxidase, the last enzyme in the mitochondrial electron transport chain which drives oxidative phosphorylation. The respiratory chain contains 3 multisubunit complexes succinate dehydrogenase (complex II, CII), ubiquinol-cytochrome c oxidoreductase (cytochrome b-c1 complex, complex III, CIII) and cytochrome c oxidase (complex IV, CIV), that cooperate to transfer electrons derived from NADH and succinate to molecular oxygen, creating an electrochemical gradient over the inner membrane that drives transmembrane transport and the ATP synthase. Cytochrome c oxidase is the component of the respiratory chain that catalyzes the reduction of oxygen to water. Electrons originating from reduced cytochrome c in the intermembrane space (IMS) are transferred via the dinuclear copper A center (CU(A)) of subunit 2 and heme A of subunit 1 to the active site in subunit 1, a binuclear center (BNC) formed by heme A3 and copper B (CU(B)). The BNC reduces molecular oxygen to 2 water molecules using 4 electrons from cytochrome c in the IMS and 4 protons from the mitochondrial matrix. This Loxodonta africana (African elephant) protein is Cytochrome c oxidase subunit 3 (MT-CO3).